Consider the following 368-residue polypeptide: Nicotinamide/nicotinic acid mononucleotide adenylyltransferase (368 aa).

Polar residues predominate over residues 1 to 14; the sequence is MHTMNGDNFANSFP. The segment at 1–25 is disordered; the sequence is MHTMNGDNFANSFPKNPLLSRNSSS. The residue at position 36 (serine 36) is a Phosphoserine. Residues 47–78 form a disordered region; sequence AKEHEERIRRPSVNRAWQKNSTSGGPSVSLEK. Polar residues predominate over residues 61-72; the sequence is RAWQKNSTSGGP. Phosphoserine is present on residues serine 75 and serine 85. Residues serine 135 and phenylalanine 136 each coordinate NAD(+). Histidine 143 is a binding site for ATP. Threonine 215, glycine 250, aspartate 252, tryptophan 263, arginine 282, and asparagine 313 together coordinate NAD(+). 318-321 serves as a coordination point for ATP; it reads TKVR.

It belongs to the eukaryotic NMN adenylyltransferase family. It depends on a divalent metal cation as a cofactor.

Its subcellular location is the cytoplasm. The protein resides in the nucleus. The enzyme catalyses beta-nicotinamide D-ribonucleotide + ATP + H(+) = diphosphate + NAD(+). It carries out the reaction nicotinate beta-D-ribonucleotide + ATP + H(+) = deamido-NAD(+) + diphosphate. The protein operates within cofactor biosynthesis; NAD(+) biosynthesis; deamido-NAD(+) from nicotinate D-ribonucleotide: step 1/1. It functions in the pathway cofactor biosynthesis; NAD(+) biosynthesis; NAD(+) from nicotinamide D-ribonucleotide: step 1/1. Catalyzes the formation of NAD(+) from nicotinamide mononucleotide (NMN) and ATP. Can also use the deamidated form; nicotinic acid mononucleotide (NaMN) as substrate to form deamido-NAD(+) (NaAD). Key enzyme in both de novo and salvage pathways for NAD(+) biosynthesis. This Schizosaccharomyces pombe (strain 972 / ATCC 24843) (Fission yeast) protein is Nicotinamide/nicotinic acid mononucleotide adenylyltransferase.